We begin with the raw amino-acid sequence, 240 residues long: Probable metal transport system ATP-binding protein TM_0124 (240 aa).

In terms of domain architecture, ABC transporter spans 4-223 (VEVKNLTYRI…LKKIFTDFDI (220 aa)). Residue 36-43 (GPNGAGKT) participates in ATP binding.

This sequence belongs to the ABC transporter superfamily.

Its function is as follows. Part of an ATP-driven transport system TM_0123/TM_0124/TM_0125 for a metal. Probably responsible for energy coupling to the transport system. The polypeptide is Probable metal transport system ATP-binding protein TM_0124 (Thermotoga maritima (strain ATCC 43589 / DSM 3109 / JCM 10099 / NBRC 100826 / MSB8)).